We begin with the raw amino-acid sequence, 115 residues long: Yop proteins translocation protein M (115 aa).

The disordered stretch occupies residues 19–38 (HGGQAGRLTETNPLTENSHQ). The span at 27 to 38 (TETNPLTENSHQ) shows a compositional bias: polar residues.

In terms of biological role, belongs to an operon involved in the translocation of Yop proteins across the bacterial membranes or in the specific control of this function. The polypeptide is Yop proteins translocation protein M (yscM) (Yersinia pestis).